Consider the following 1669-residue polypeptide: Dystrophin, isoform B (1669 aa).

A compositionally biased stretch (pro residues) spans 1–11 (MTAKPPPPIPP). 5 disordered regions span residues 1 to 28 (MTAKPPPPIPPTLGGDDSGTHGPKLAPE), 43 to 243 (RGQQ…SEDA), 327 to 356 (RAQAQQQSLLNNSSSSSSNSQVEQSMRSTI), 389 to 417 (GGGGGNSSTGNAVANSGTSGSQQPPMPLS), and 481 to 508 (SGALSREELRMRRRSSHDETQLTQNSSG). Residues 53–62 (SQEQHATNTL) are compositionally biased toward polar residues. Positions 118-131 (GLPPTMRQPPPLPR) are enriched in pro residues. Positions 132-147 (KPASTQSSAQNSAQSS) are enriched in low complexity. The segment covering 153 to 166 (KFKDKPPPPPEKHS) has biased composition (basic and acidic residues). Low complexity-rich tracts occupy residues 328-347 (AQAQQQSLLNNSSSSSSNSQ) and 396-405 (STGNAVANSG). Positions 485 to 500 (SREELRMRRRSSHDET) are enriched in basic and acidic residues. Spectrin repeat units follow at residues 541-643 (QRFE…KQLH), 650-747 (QSFD…NRLE), 754-883 (NALL…HRLD), and 890-990 (RQFQ…KVLC). The segment at 827–851 (VSDTSDTEANHDSDSRYMSAEEQSR) is disordered. The disordered stretch occupies residues 994-1024 (AQQTHENGDDGRTTSNSGTIGPLPNLGQSVK). The region spanning 1021-1054 (QSVKPPWERATTAANVPYYIDHERETTHWDHPEM) is the WW domain. The ZZ-type zinc finger occupies 1279–1335 (KHQAKCNICKEYPIVGFRYRCLKCFNFDMCQKCFFFGRNAKNHKLTHPMHEYCTTTT). Zn(2+) is bound by residues cysteine 1284, cysteine 1287, cysteine 1299, cysteine 1302, cysteine 1308, cysteine 1311, histidine 1321, and histidine 1325. Position 1379 is a phosphoserine (serine 1379). 2 disordered regions span residues 1488–1516 (EQSGMPEDSNGMQHSSSSMTGLSGQGEQG) and 1559–1669 (DEPN…ELQK). Composition is skewed to polar residues over residues 1497–1509 (NGMQHSSSSMTGL) and 1580–1611 (ALNSKPNTLQTRSVTASQLNTDSPAKMNQQNG). A compositionally biased stretch (acidic residues) spans 1630–1641 (QELESINDDLED). Residues 1642 to 1660 (SSSSNTTNTTTTTTTTATT) are compositionally biased toward low complexity.

Component of the dystrophin associated protein complex (DAPC). Interacts with Dg, via the Dg WW domain binding sites. Expressed in neuronally derived tissues, mainly the CNS and the brain of stage 16 embryos. Lower level expression is seen in the sensory organs. Expression is absent from the musculature. In larvae, expression is predominant throughout the neuropil and brain and in the eye antennal disks.

It localises to the cell membrane. The protein resides in the sarcolemma. Its subcellular location is the cytoplasm. It is found in the cytoskeleton. Its function is as follows. Required for the maintenance of appropriate synaptic retrograde communication and the stabilization of muscle cell architecture or physiology. May play a role in anchoring the cytoskeleton to the plasma membrane. The polypeptide is Dystrophin, isoform B (Dys) (Drosophila melanogaster (Fruit fly)).